The primary structure comprises 194 residues: Probable GTP-binding protein EngB (194 aa).

Positions 19–193 (DCIQICFWGR…VLFIEENIFK (175 aa)) constitute an EngB-type G domain. GTP contacts are provided by residues 27–34 (GRSNVGKS), 53–57 (GRTQF), 70–73 (DLPG), 137–140 (TKID), and 172–174 (VSS). Residues Ser-34 and Thr-55 each coordinate Mg(2+).

The protein belongs to the TRAFAC class TrmE-Era-EngA-EngB-Septin-like GTPase superfamily. EngB GTPase family. Mg(2+) serves as cofactor.

In terms of biological role, necessary for normal cell division and for the maintenance of normal septation. The polypeptide is Probable GTP-binding protein EngB (Mycoplasmopsis agalactiae (strain NCTC 10123 / CIP 59.7 / PG2) (Mycoplasma agalactiae)).